The chain runs to 128 residues: Calcitonin gene-related peptide 1 (128 aa).

The N-terminal stretch at 1-25 is a signal peptide; sequence MGFLKFSPFLVVSILLLYQACGLQA. Residues 26–80 constitute a propeptide that is removed on maturation; that stretch reads VPLRSTLESSPGMAATLSEEEARLLLAALVQNYMQMKVRELEQEQEAEGSSVTAQ. Residues cysteine 84 and cysteine 89 are joined by a disulfide bond. Phenylalanine 119 carries the phenylalanine amide modification. The propeptide occupies 125-128; the sequence is DLQA.

Belongs to the calcitonin family.

Its subcellular location is the secreted. CGRP1/CALCA is a peptide hormone that induces vasodilation mediated by the CALCRL-RAMP1 receptor complex. Dilates a variety of vessels including the coronary, cerebral and systemic vasculature. Its abundance in the CNS also points toward a neurotransmitter or neuromodulator role. It also elevates platelet cAMP. CGRP1 can also bind and activate CALCR-RAMP1 (AMYR1) receptor complex. The sequence is that of Calcitonin gene-related peptide 1 from Rattus norvegicus (Rat).